The sequence spans 246 residues: 3-oxoacyl-[acyl-carrier-protein] reductase FabG (246 aa).

NADP(+)-binding positions include 11–14 (GASR), 62–63 (NV), and Asn89. Ser141 serves as a coordination point for substrate. Residue Tyr154 is the Proton acceptor of the active site. Residues 154-158 (YVATK) and Ile187 each bind NADP(+).

It belongs to the short-chain dehydrogenases/reductases (SDR) family. As to quaternary structure, homotetramer.

The catalysed reaction is a (3R)-hydroxyacyl-[ACP] + NADP(+) = a 3-oxoacyl-[ACP] + NADPH + H(+). It functions in the pathway lipid metabolism; fatty acid biosynthesis. Functionally, catalyzes the NADPH-dependent reduction of beta-ketoacyl-ACP substrates to beta-hydroxyacyl-ACP products, the first reductive step in the elongation cycle of fatty acid biosynthesis. This Staphylococcus aureus (strain Mu50 / ATCC 700699) protein is 3-oxoacyl-[acyl-carrier-protein] reductase FabG (fabG).